Here is a 289-residue protein sequence, read N- to C-terminus: N-acetylmuramoyl-L-alanine amidase AmiA (289 aa).

The tat-type signal signal peptide spans 1–34 (MSTFKPLKTLTSRRQVLKAGLAALTLSGMSQAIA). Residues 39 to 63 (LKTSNGHSKPKAKKSGGKRVVVLDP) are disordered. Basic residues predominate over residues 46-55 (SKPKAKKSGG). The MurNAc-LAA domain occupies 59–273 (VVLDPGHGGI…IATAIAEGVI (215 aa)).

This sequence belongs to the N-acetylmuramoyl-L-alanine amidase 3 family. Exported by the Tat system. The position of the signal peptide cleavage has not been experimentally proven. Can also be exported by the Sec system.

The protein resides in the periplasm. The enzyme catalyses Hydrolyzes the link between N-acetylmuramoyl residues and L-amino acid residues in certain cell-wall glycopeptides.. Its function is as follows. Cell-wall hydrolase involved in septum cleavage during cell division. Can also act as powerful autolysin in the presence of murein synthesis inhibitors. The polypeptide is N-acetylmuramoyl-L-alanine amidase AmiA (amiA) (Escherichia coli (strain K12)).